Reading from the N-terminus, the 435-residue chain is Glutamate-1-semialdehyde 2,1-aminomutase (435 aa).

K266 bears the N6-(pyridoxal phosphate)lysine mark.

The protein belongs to the class-III pyridoxal-phosphate-dependent aminotransferase family. HemL subfamily. Homodimer. The cofactor is pyridoxal 5'-phosphate.

The protein localises to the cytoplasm. It catalyses the reaction (S)-4-amino-5-oxopentanoate = 5-aminolevulinate. The protein operates within porphyrin-containing compound metabolism; protoporphyrin-IX biosynthesis; 5-aminolevulinate from L-glutamyl-tRNA(Glu): step 2/2. The protein is Glutamate-1-semialdehyde 2,1-aminomutase of Coxiella burnetii (strain Dugway 5J108-111).